The primary structure comprises 467 residues: Asparagine--tRNA ligase (467 aa).

It belongs to the class-II aminoacyl-tRNA synthetase family. As to quaternary structure, homodimer.

It is found in the cytoplasm. It catalyses the reaction tRNA(Asn) + L-asparagine + ATP = L-asparaginyl-tRNA(Asn) + AMP + diphosphate + H(+). The polypeptide is Asparagine--tRNA ligase (Baumannia cicadellinicola subsp. Homalodisca coagulata).